The following is a 201-amino-acid chain: Elongation factor Ts (201 aa).

The tract at residues 81–84 (TDFV) is involved in Mg(2+) ion dislocation from EF-Tu.

The protein belongs to the EF-Ts family.

It localises to the cytoplasm. Functionally, associates with the EF-Tu.GDP complex and induces the exchange of GDP to GTP. It remains bound to the aminoacyl-tRNA.EF-Tu.GTP complex up to the GTP hydrolysis stage on the ribosome. This is Elongation factor Ts from Syntrophus aciditrophicus (strain SB).